Reading from the N-terminus, the 351-residue chain is Hepatocyte nuclear factor 3-gamma (351 aa).

Over residues 52–73 (PGGLPASPLPTGPLAPPAPTAP) the composition is skewed to pro residues. The disordered stretch occupies residues 52–94 (PGGLPASPLPTGPLAPPAPTAPLGPTFPGLGASTGGGSSSGYG). The segment covering 83–94 (ASTGGGSSSGYG) has biased composition (gly residues). The segment at residues 118–212 (KPPYSYISLI…ENGCYLRRQK (95 aa)) is a DNA-binding region (fork-head). The tract at residues 218–275 (EKVKKGGGGSSASRNSAGSASTATAPAATVASTPQPQPPPPEPEAQGGDEVGALDCGS) is disordered. Residues 228-251 (SASRNSAGSASTATAPAATVASTP) are compositionally biased toward low complexity.

It localises to the nucleus. Transcription activator for a number of liver genes such as AFP, albumin, tyrosine aminotransferase, PEPCK, etc. Interacts with the cis-acting regulatory regions of these genes. This chain is Hepatocyte nuclear factor 3-gamma (FOXA3), found in Bos taurus (Bovine).